The following is a 329-amino-acid chain: Peroxidase 30 (329 aa).

The signal sequence occupies residues 1–27 (MKTMTQLNIAVVVVVTVLIGMLRSSEA). Intrachain disulfides connect Cys38/Cys116, Cys71/Cys76, Cys122/Cys324, and Cys201/Cys234. The active-site Proton acceptor is the His69. Residues Asp70, Val73, Gly75, Asp77, and Ser79 each coordinate Ca(2+). Residues Asn83 and Asn155 are each glycosylated (N-linked (GlcNAc...) asparagine). The segment at 141–165 (SWSVPTGRRDGRISNKTEATNNIPP) is disordered. Residues 156-165 (KTEATNNIPP) are compositionally biased toward polar residues. Substrate is bound at residue Pro164. N-linked (GlcNAc...) asparagine glycosylation is present at Asn169. His194 lines the heme b pocket. Thr195 lines the Ca(2+) pocket. 2 N-linked (GlcNAc...) asparagine glycosylation sites follow: Asn210 and Asn240. Ca(2+) is bound by residues Asp247, Ser250, and Asp255. Asn290 is a glycosylation site (N-linked (GlcNAc...) asparagine).

The protein belongs to the peroxidase family. Classical plant (class III) peroxidase subfamily. Requires heme b as cofactor. Ca(2+) is required as a cofactor. Mainly expressed in roots.

It is found in the secreted. It catalyses the reaction 2 a phenolic donor + H2O2 = 2 a phenolic radical donor + 2 H2O. In terms of biological role, removal of H(2)O(2), oxidation of toxic reductants, biosynthesis and degradation of lignin, suberization, auxin catabolism, response to environmental stresses such as wounding, pathogen attack and oxidative stress. These functions might be dependent on each isozyme/isoform in each plant tissue. The chain is Peroxidase 30 (PER30) from Arabidopsis thaliana (Mouse-ear cress).